The primary structure comprises 449 residues: MPATLLRAVARSHHILSKAHQCRRIGHLMLKPLKEFENTTCSTLTIRQSLDLFLPDKTASGLNKSQILEMNQKKSDTSMLSPLNAARCQDEKAHLPTMKSFGTHRRVTHKPNLLGSKWFIKILKRHFSSVSTETFVPKQDFPQVKRPLKASRTRQPSRTNLPVLSVNEDLMHCTAFATADEYHLGNLSQDLASHGYVEVTSLPRDAANILVMGVENSAKEGDPGTIFFFREGAAVFWNVKDKTMKHVMKVLEKHEIQPYEIALVHWENEELNYIKIEGQSKLHRGEIKLNSELDLDDAILEKFAFSNALCLSVKLAIWEASLDKFIESIQSIPEALKAGKKVKLSHEEVMQKIGELFALRHRINLSSDFLITPDFYWDRENLEGLYDKTCQFLSIGRRVKVMNEKLQHCMELTDLMRNHLNEKRALRLEWMIVILITIEVMFELGRVFF.

The transit peptide at 1-12 (MPATLLRAVARS) directs the protein to the mitochondrion.

It belongs to the RMD1/sif2 family. Homooligomer.

Its subcellular location is the mitochondrion. Functionally, required for mitochondrial translation, possibly by coordinating the assembly or maintenance of the mitochondrial ribosome. The chain is Required for meiotic nuclear division protein 1 homolog (RMND1) from Homo sapiens (Human).